A 315-amino-acid chain; its full sequence is tRNA pseudouridine synthase B (315 aa).

Asp-47 (nucleophile) is an active-site residue.

Belongs to the pseudouridine synthase TruB family. Type 1 subfamily.

It carries out the reaction uridine(55) in tRNA = pseudouridine(55) in tRNA. In terms of biological role, responsible for synthesis of pseudouridine from uracil-55 in the psi GC loop of transfer RNAs. This Shewanella amazonensis (strain ATCC BAA-1098 / SB2B) protein is tRNA pseudouridine synthase B.